Reading from the N-terminus, the 199-residue chain is Recombination protein RecR (199 aa).

The C4-type zinc-finger motif lies at 58 to 73; sequence CKKCFNLTSEEECEIC. The Toprim domain occupies 81 to 175; sequence KIICVVAETK…KVTRIAYGLP (95 aa).

The protein belongs to the RecR family.

In terms of biological role, may play a role in DNA repair. It seems to be involved in an RecBC-independent recombinational process of DNA repair. It may act with RecF and RecO. This Prochlorococcus marinus subsp. pastoris (strain CCMP1986 / NIES-2087 / MED4) protein is Recombination protein RecR.